We begin with the raw amino-acid sequence, 277 residues long: Shikimate dehydrogenase (NADP(+)) (277 aa).

Residues 15–17 and T62 each bind shikimate; that span reads SLS. Residue K66 is the Proton acceptor of the active site. 2 residues coordinate shikimate: N87 and D102. Residues 127-131, 151-156, and I219 each bind NADP(+); these read GAGGA and NRTVSK. Y221 contacts shikimate. An NADP(+)-binding site is contributed by G242.

Belongs to the shikimate dehydrogenase family. As to quaternary structure, homodimer.

The catalysed reaction is shikimate + NADP(+) = 3-dehydroshikimate + NADPH + H(+). It participates in metabolic intermediate biosynthesis; chorismate biosynthesis; chorismate from D-erythrose 4-phosphate and phosphoenolpyruvate: step 4/7. Functionally, involved in the biosynthesis of the chorismate, which leads to the biosynthesis of aromatic amino acids. Catalyzes the reversible NADPH linked reduction of 3-dehydroshikimate (DHSA) to yield shikimate (SA). The sequence is that of Shikimate dehydrogenase (NADP(+)) from Geobacillus sp. (strain WCH70).